We begin with the raw amino-acid sequence, 425 residues long: Orexin/Hypocretin receptor type 1 (425 aa).

Positions 1-25 (MEPSATPGPQMGVPTEGRERSPEPP) are disordered. Over 1–46 (MEPSATPGPQMGVPTEGRERSPEPPDYEDEFLRYLWRDYLYPKQYE) the chain is Extracellular. A required for response to orexin-A region spans residues 26-41 (DYEDEFLRYLWRDYLY). The helical transmembrane segment at 47–67 (WVLIAAYVAVFFVALVGNTLV) threads the bilayer. Over 68–82 (CLAVWRNHHMRTVTN) the chain is Cytoplasmic. A helical membrane pass occupies residues 83–105 (YFIVNLSLADVLVTAICLPASLL). Topologically, residues 106–119 (VDITESWLFGHALC) are extracellular. Cys-119 and Cys-202 are joined by a disulfide. Residues 120 to 140 (KVIPYLQAVSVSVAVLTLSFI) traverse the membrane as a helical segment. At 141–160 (ALDRWYAICHPLLFKSTARR) the chain is on the cytoplasmic side. The helical transmembrane segment at 161 to 182 (ARGSILGIWAVSLAVMVPQAAV) threads the bilayer. Topologically, residues 183-213 (MECSSVLPELANRTRLFSVCDERWADDLYPK) are extracellular. N-linked (GlcNAc...) asparagine glycosylation is present at Asn-194. The helical transmembrane segment at 214–235 (IYHSCFFIVTYLAPLGLMAMAY) threads the bilayer. The Cytoplasmic portion of the chain corresponds to 236-298 (FQIFRKLWGR…QMRARRKTAK (63 aa)). The chain crosses the membrane as a helical span at residues 299 to 321 (MLMVVLLVFALCYLPISVLNVLK). Over 322–336 (RVFGMFRQASDREAV) the chain is Extracellular. A helical transmembrane segment spans residues 337–360 (YACFTFSHWLVYANSAANPIIYNF). The Cytoplasmic segment spans residues 361–425 (LSGKFREQFK…LLTSVTTVLP (65 aa)).

Belongs to the G-protein coupled receptor 1 family.

It localises to the cell membrane. Functionally, moderately selective excitatory receptor for orexin-A and, with a lower affinity, for orexin-B neuropeptide. Triggers an increase in cytoplasmic Ca(2+) levels in response to orexin-A binding. In Bos taurus (Bovine), this protein is Orexin/Hypocretin receptor type 1.